The sequence spans 555 residues: Lysine--tRNA ligase (555 aa).

The 'HIGH' region motif lies at 37–45 (TSGRLHVGN). The 'KMSKS' region signature appears at 301–305 (AMSSS).

Belongs to the class-I aminoacyl-tRNA synthetase family.

It localises to the cytoplasm. The catalysed reaction is tRNA(Lys) + L-lysine + ATP = L-lysyl-tRNA(Lys) + AMP + diphosphate. In Methanopyrus kandleri (strain AV19 / DSM 6324 / JCM 9639 / NBRC 100938), this protein is Lysine--tRNA ligase.